A 321-amino-acid polypeptide reads, in one-letter code: Torsin-2A (321 aa).

A signal peptide spans 1–26; the sequence is MAAATRSCRPWGSLLGLIWLVSAAAA. Residue 93–100 participates in ATP binding; it reads GWTGTGKS. N149 carries N-linked (GlcNAc...) asparagine glycosylation.

This sequence belongs to the ClpA/ClpB family. Torsin subfamily. In terms of assembly, homohexamer. Interacts with TOR1AIP1.

It localises to the endoplasmic reticulum lumen. This is Torsin-2A (TOR2A) from Bos taurus (Bovine).